A 576-amino-acid chain; its full sequence is Pentatricopeptide repeat-containing protein At1g79080, chloroplastic (576 aa).

Residues M1 to S37 constitute a chloroplast transit peptide. PPR repeat units lie at residues N105–P139, D140–S174, N175–P209, N210–P244, N245–A279, N280–P314, S315–F349, T352–P386, N387–K417, T422–P456, D457–S487, T493–P527, and N528–G562.

The protein belongs to the PPR family. P subfamily.

Its subcellular location is the plastid. The protein localises to the chloroplast. The sequence is that of Pentatricopeptide repeat-containing protein At1g79080, chloroplastic from Arabidopsis thaliana (Mouse-ear cress).